Here is a 214-residue protein sequence, read N- to C-terminus: MPDFKIVISDPQSVEPKRIKVKAKANDQIKSIAGEKEGKAVPQAKVNEKTKQLLNIDTLITLEITKQEGDKKVKVKSHFKVEVDNNVPDNEVWISKTMAEKFGAEDFEAIAYRTKTLQISIDQDKATNLVGLKIGDTFEANQLIGLPVKLKITGGSDNSGFPMRFDVTGAAKRKILLSGPPGFYPNEDGERRRKTIRGNTISQEIVQINTIIVR.

The protein belongs to the eukaryotic ribosomal protein eS6 family.

This is Small ribosomal subunit protein eS6 (rps6e) from Saccharolobus islandicus (strain Y.G.57.14 / Yellowstone #1) (Sulfolobus islandicus).